The chain runs to 494 residues: Xylan glycosyltransferase MUCI21 (494 aa).

The Cytoplasmic segment spans residues 1–40 (MRQNLKKVAQIKVDESKKLFPYVFRVKTSCGNCAKRSKPK). Residues 41 to 61 (LIYLLIFSLISSCFVFAPQLL) traverse the membrane as a helical; Signal-anchor for type II membrane protein segment. The Lumenal segment spans residues 62–494 (CFPYPSALFL…LIDAYAKSIR (433 aa)). Asn-375 carries an N-linked (GlcNAc...) asparagine glycan.

It belongs to the glycosyltransferase 61 family.

The protein localises to the golgi apparatus membrane. Glycosyletransferase required for the proper composition and structural properties of released seed coat mucilage. Required for the production of highly branched xylan polymers in seed coat mucilage. Facilitates the addition of xylose residues directly to the xylan backbone. Xylan with xylose side chains seems to be necessary for pectin attachment to the seed surface. Essential for xylan synthesis in seed coat epidermal (SCE) cells. In Arabidopsis thaliana (Mouse-ear cress), this protein is Xylan glycosyltransferase MUCI21.